The following is a 173-amino-acid chain: Large ribosomal subunit protein uL10 (173 aa).

This sequence belongs to the universal ribosomal protein uL10 family. As to quaternary structure, part of the ribosomal stalk of the 50S ribosomal subunit. The N-terminus interacts with L11 and the large rRNA to form the base of the stalk. The C-terminus forms an elongated spine to which L12 dimers bind in a sequential fashion forming a multimeric L10(L12)X complex.

In terms of biological role, forms part of the ribosomal stalk, playing a central role in the interaction of the ribosome with GTP-bound translation factors. The chain is Large ribosomal subunit protein uL10 from Cupriavidus pinatubonensis (strain JMP 134 / LMG 1197) (Cupriavidus necator (strain JMP 134)).